The following is a 930-amino-acid chain: Isoleucine--tRNA ligase (930 aa).

Positions 1 to 21 (MRVKDTLNLGKTKFPMRGRLP) are disordered. A 'HIGH' region motif is present at residues 57-67 (PYANGPIHIGH). An L-isoleucyl-5'-AMP-binding site is contributed by glutamate 555. The 'KMSKS' region signature appears at 596–600 (KMSKS). Lysine 599 contacts ATP. Residues cysteine 889, cysteine 892, cysteine 909, and cysteine 912 each coordinate Zn(2+).

This sequence belongs to the class-I aminoacyl-tRNA synthetase family. IleS type 1 subfamily. Monomer. It depends on Zn(2+) as a cofactor.

It localises to the cytoplasm. It catalyses the reaction tRNA(Ile) + L-isoleucine + ATP = L-isoleucyl-tRNA(Ile) + AMP + diphosphate. Its function is as follows. Catalyzes the attachment of isoleucine to tRNA(Ile). As IleRS can inadvertently accommodate and process structurally similar amino acids such as valine, to avoid such errors it has two additional distinct tRNA(Ile)-dependent editing activities. One activity is designated as 'pretransfer' editing and involves the hydrolysis of activated Val-AMP. The other activity is designated 'posttransfer' editing and involves deacylation of mischarged Val-tRNA(Ile). This Limosilactobacillus fermentum (strain NBRC 3956 / LMG 18251) (Lactobacillus fermentum) protein is Isoleucine--tRNA ligase.